The following is a 195-amino-acid chain: MDELRWYHITVCLDHIFGHNCSLSCKDCMNGGKCQEGKSECSCPAGCRVILCNENCLEGAYGAGCTSECQCVEENTLECSAKNGSCTCKSGYQGNRCQKDGLWGPEGWFSSAPCENGGQCNKKTGNCDCTPDYTRKSCTILRCISLTNLALSRRSSPMKYQQNVSSHREVRQRQQCSSDRPFKKLLCKFSFKIGM.

In terms of domain architecture, EGF-like spans 86-97 (CTCKSGYQGNRC).

This chain is Putative EGF-like and EMI domain-containing protein 1 (EGFEM1P), found in Homo sapiens (Human).